Consider the following 232-residue polypeptide: dTTP/UTP pyrophosphatase (232 aa).

The active-site Proton acceptor is the Asp103.

Belongs to the Maf family. YhdE subfamily. A divalent metal cation serves as cofactor.

It is found in the cytoplasm. The catalysed reaction is dTTP + H2O = dTMP + diphosphate + H(+). It catalyses the reaction UTP + H2O = UMP + diphosphate + H(+). Nucleoside triphosphate pyrophosphatase that hydrolyzes dTTP and UTP. May have a dual role in cell division arrest and in preventing the incorporation of modified nucleotides into cellular nucleic acids. This Bartonella henselae (strain ATCC 49882 / DSM 28221 / CCUG 30454 / Houston 1) (Rochalimaea henselae) protein is dTTP/UTP pyrophosphatase.